We begin with the raw amino-acid sequence, 308 residues long: Cytochrome b (308 aa).

A run of 4 helical transmembrane segments spans residues 1–21, 45–66, 81–101, and 146–166; these read FGSLLGLCLITQIITGLLLAM, WLIRNLHANGASFFFICIYLHI, WNIGVILLLTLMATAFVGYVL, and FFAFHFLLPFVIAGLTLVHLT. Heme b-binding residues include H51 and H65. Heme b-binding residues include H150 and H164. H169 is a binding site for a ubiquinone. 3 helical membrane-spanning segments follow: residues 194–214, 256–276, and 288–308; these read IKDLLGFALMLIPLITLALFS, LGGVLALAASVLILFLIPLLH, and LSQILFWTLVADLLILTWVGS.

The protein belongs to the cytochrome b family. As to quaternary structure, the cytochrome bc1 complex contains 11 subunits: 3 respiratory subunits (MT-CYB, CYC1 and UQCRFS1), 2 core proteins (UQCRC1 and UQCRC2) and 6 low-molecular weight proteins (UQCRH/QCR6, UQCRB/QCR7, UQCRQ/QCR8, UQCR10/QCR9, UQCR11/QCR10 and a cleavage product of UQCRFS1). This cytochrome bc1 complex then forms a dimer. Heme b serves as cofactor.

Its subcellular location is the mitochondrion inner membrane. Functionally, component of the ubiquinol-cytochrome c reductase complex (complex III or cytochrome b-c1 complex) that is part of the mitochondrial respiratory chain. The b-c1 complex mediates electron transfer from ubiquinol to cytochrome c. Contributes to the generation of a proton gradient across the mitochondrial membrane that is then used for ATP synthesis. The polypeptide is Cytochrome b (MT-CYB) (Corvus corax (Common raven)).